The primary structure comprises 345 residues: Dihydroorotase (345 aa).

Zn(2+) contacts are provided by His-13 and His-15. Residues 15–17 (HLR) and Asn-41 contribute to the substrate site. The Zn(2+) site is built by Lys-99, His-136, and His-174. At Lys-99 the chain carries N6-carboxylysine. Position 136 (His-136) interacts with substrate. Leu-219 lines the substrate pocket. Asp-247 provides a ligand contact to Zn(2+). Asp-247 is an active-site residue. Substrate contacts are provided by His-251 and Ala-263.

The protein belongs to the metallo-dependent hydrolases superfamily. DHOase family. Class II DHOase subfamily. In terms of assembly, homodimer. It depends on Zn(2+) as a cofactor.

The catalysed reaction is (S)-dihydroorotate + H2O = N-carbamoyl-L-aspartate + H(+). It functions in the pathway pyrimidine metabolism; UMP biosynthesis via de novo pathway; (S)-dihydroorotate from bicarbonate: step 3/3. Catalyzes the reversible cyclization of carbamoyl aspartate to dihydroorotate. This is Dihydroorotase from Agrobacterium fabrum (strain C58 / ATCC 33970) (Agrobacterium tumefaciens (strain C58)).